Here is a 568-residue protein sequence, read N- to C-terminus: Oxygen-dependent choline dehydrogenase (568 aa).

8 to 37 (DYIIIGAGSAGNTLAARLTEDAGVTVLLLE) is an FAD binding site. His-477 acts as the Proton acceptor in catalysis.

This sequence belongs to the GMC oxidoreductase family. The cofactor is FAD.

The catalysed reaction is choline + A = betaine aldehyde + AH2. It catalyses the reaction betaine aldehyde + NAD(+) + H2O = glycine betaine + NADH + 2 H(+). It functions in the pathway amine and polyamine biosynthesis; betaine biosynthesis via choline pathway; betaine aldehyde from choline (cytochrome c reductase route): step 1/1. Involved in the biosynthesis of the osmoprotectant glycine betaine. Catalyzes the oxidation of choline to betaine aldehyde and betaine aldehyde to glycine betaine at the same rate. This is Oxygen-dependent choline dehydrogenase from Pseudomonas syringae pv. tomato (strain ATCC BAA-871 / DC3000).